The chain runs to 458 residues: ATP synthase subunit beta (458 aa).

Residue 148–155 (GGAGVGKT) participates in ATP binding.

This sequence belongs to the ATPase alpha/beta chains family. As to quaternary structure, F-type ATPases have 2 components, CF(1) - the catalytic core - and CF(0) - the membrane proton channel. CF(1) has five subunits: alpha(3), beta(3), gamma(1), delta(1), epsilon(1). CF(0) has three main subunits: a(1), b(2) and c(9-12). The alpha and beta chains form an alternating ring which encloses part of the gamma chain. CF(1) is attached to CF(0) by a central stalk formed by the gamma and epsilon chains, while a peripheral stalk is formed by the delta and b chains.

Its subcellular location is the cell inner membrane. It catalyses the reaction ATP + H2O + 4 H(+)(in) = ADP + phosphate + 5 H(+)(out). Functionally, produces ATP from ADP in the presence of a proton gradient across the membrane. The catalytic sites are hosted primarily by the beta subunits. The chain is ATP synthase subunit beta from Actinobacillus succinogenes (strain ATCC 55618 / DSM 22257 / CCUG 43843 / 130Z).